The following is a 93-amino-acid chain: Co-chaperonin GroES (93 aa).

This sequence belongs to the GroES chaperonin family. In terms of assembly, heptamer of 7 subunits arranged in a ring. Interacts with the chaperonin GroEL.

It is found in the cytoplasm. Its function is as follows. Together with the chaperonin GroEL, plays an essential role in assisting protein folding. The GroEL-GroES system forms a nano-cage that allows encapsulation of the non-native substrate proteins and provides a physical environment optimized to promote and accelerate protein folding. GroES binds to the apical surface of the GroEL ring, thereby capping the opening of the GroEL channel. The chain is Co-chaperonin GroES from Streptococcus sanguinis.